The chain runs to 261 residues: Metallo-beta-lactamase fold-containing protein ST1585 (261 aa).

7 residues coordinate Zn(2+): H58, H60, D62, H63, H148, D165, and H207.

This sequence belongs to the metallo-beta-lactamase superfamily. In terms of assembly, monomer.

The chain is Metallo-beta-lactamase fold-containing protein ST1585 from Sulfurisphaera tokodaii (strain DSM 16993 / JCM 10545 / NBRC 100140 / 7) (Sulfolobus tokodaii).